We begin with the raw amino-acid sequence, 960 residues long: Dynamin-like GTPase OPA1, mitochondrial (960 aa).

Residues 1–87 (MWRLRRAAVA…IKYGYQPRRN (87 aa)) constitute a mitochondrion transit peptide. Over 88–96 (FWPARLATR) the chain is Mitochondrial matrix. Residues 97–113 (LLKLRYLILGSAVGGGY) traverse the membrane as a helical segment. The Mitochondrial intermembrane portion of the chain corresponds to 114–770 (TAKKTFDQWK…NAIENMVGPD (657 aa)). Positions 210 to 254 (SDKEKIDQLQEELLHTQLKYQRILERLEKENKELRKLVLQKDDKG) form a coiled coil. An N6-acetyllysine modification is found at K228. The Dynamin-type G domain maps to 285-561 (QDHLPRVVVV…FWKMVRESVE (277 aa)). Residues 295–302 (GDQSAGKT) form a G1 motif region. GTP-binding residues include S298, G300, K301, T302, S303, and G317. Position 302 (T302) interacts with Mg(2+). A G2 motif region spans residues 321–324 (MMTR). T323 and D398 together coordinate Mg(2+). Positions 398 to 401 (DLPG) are G3 motif. Positions 467-470 (TKVD) are G4 motif. Residues K468, D470, and T503 each coordinate GTP. The segment at 501–504 (VVTG) is G5 motif. Stalk region regions lie at residues 589–836 (DRNE…IKDT) and 874–928 (CNDV…IKLL). A paddle region region spans residues 736-856 (SDKQQWDAAI…KTALNHCNLC (121 aa)). Residues 771-781 (WKKRWLYWKNR) lie within the membrane without spanning it. The Mitochondrial intermembrane segment spans residues 782-960 (TQEQCVHNET…AFIEALHQEK (179 aa)). Residues C856 and C874 are joined by a disulfide bond. Positions 895–960 (RQQLTNTEVR…AFIEALHQEK (66 aa)) form a coiled coil.

It belongs to the TRAFAC class dynamin-like GTPase superfamily. Dynamin/Fzo/YdjA family. Oligomeric complex consisting of membrane-bound and soluble forms of OPA1. Interacts with RCC1L; RCC1L acts as a guanine nucleotide exchange factor (GEF) for OPA1 by exchanging bound GDP for free GTP. Interacts with CHCHD3 and IMMT; these interactions occur preferentially with soluble OPA1 forms. Interacts with PRELID1. In terms of processing, cleaved by OMA1 or YME1L downstream of the transmembrane region in response to different signals to generate soluble forms. Cleaved by OMA1 at position S1 following stress conditions, generating the short soluble form (Dynamin-like GTPase OPA1, short form; S-OPA1). AFG3L2 is involved in the regulation of OMA1-dependent processing of OPA1. PARL-dependent proteolytic processing releases an antiapoptotic soluble form not required for mitochondrial fusion.

The protein localises to the mitochondrion inner membrane. The protein resides in the mitochondrion intermembrane space. The catalysed reaction is GTP + H2O = GDP + phosphate + H(+). Activated by guanine nucleotide exchange factor RCC1L. Functionally, dynamin-related GTPase that is essential for normal mitochondrial morphology by mediating fusion of the mitochondrial inner membranes, regulating cristae morphology and maintaining respiratory chain function. Exists in two forms: the transmembrane, long form (Dynamin-like GTPase OPA1, long form; L-OPA1), which is tethered to the inner mitochondrial membrane, and the short soluble form (Dynamin-like GTPase OPA1, short form; S-OPA1), which results from proteolytic cleavage and localizes in the intermembrane space. Both forms (L-OPA1 and S-OPA1) cooperate to catalyze the fusion of the mitochondrial inner membrane. The equilibrium between L-OPA1 and S-OPA1 is essential: excess levels of S-OPA1, produced by cleavage by OMA1 following loss of mitochondrial membrane potential, lead to an impaired equilibrium between L-OPA1 and S-OPA1, inhibiting mitochondrial fusion. The balance between L-OPA1 and S-OPA1 also influences cristae shape and morphology. Involved in remodeling cristae and the release of cytochrome c during apoptosis. Proteolytic processing by PARL in response to intrinsic apoptotic signals may lead to disassembly of OPA1 oligomers and release of the caspase activator cytochrome C (CYCS) into the mitochondrial intermembrane space. Acts as a regulator of T-helper Th17 cells, which are characterized by cells with fused mitochondria with tight cristae, by mediating mitochondrial membrane remodeling: OPA1 is required for interleukin-17 (IL-17) production. Its role in mitochondrial morphology is required for mitochondrial genome maintenance. Its function is as follows. Constitutes the transmembrane long form (L-OPA1) that plays a central role in mitochondrial inner membrane fusion and cristae morphology. L-OPA1 and the soluble short form (S-OPA1) form higher-order helical assemblies that coordinate the fusion of mitochondrial inner membranes. Inner membrane-anchored L-OPA1 molecules initiate membrane remodeling by recruiting soluble S-OPA1 to rapidly polymerize into a flexible cylindrical scaffold encaging the mitochondrial inner membrane. Once at the membrane surface, the formation of S-OPA1 helices induce bilayer curvature. OPA1 dimerization through the paddle region, which inserts into cardiolipin-containing membrane, promotes GTP hydrolysis and the helical assembly of a flexible OPA1 lattice on the membrane, which drives membrane curvature and mitochondrial fusion. Plays a role in the maintenance and remodeling of mitochondrial cristae, some invaginations of the mitochondrial inner membrane that provide an increase in the surface area. Probably acts by forming helical filaments at the inside of inner membrane tubes with the shape and dimensions of crista junctions. The equilibrium between L-OPA1 and S-OPA1 influences cristae shape and morphology: increased L-OPA1 levels promote cristae stacking and elongated mitochondria, while increased S-OPA1 levels correlated with irregular cristae packing and round mitochondria shape. Constitutes the soluble short form (S-OPA1) generated by cleavage by OMA1, which plays a central role in mitochondrial inner membrane fusion and cristae morphology. The transmembrane long form (L-OPA1) and the S-OPA1 form higher-order helical assemblies that coordinate the fusion of mitochondrial inner membranes. Inner membrane-anchored L-OPA1 molecules initiate membrane remodeling by recruiting soluble S-OPA1 to rapidly polymerize into a flexible cylindrical scaffold encaging the mitochondrial inner membrane. Once at the membrane surface, the formation of S-OPA1 helices induce bilayer curvature. OPA1 dimerization through the paddle region, which inserts into cardiolipin-containing membrane, promotes GTP hydrolysis and the helical assembly of a flexible OPA1 lattice on the membrane, which drives membrane curvature and mitochondrial fusion. Excess levels of S-OPA1 produced by cleavage by OMA1 following stress conditions that induce loss of mitochondrial membrane potential, lead to an impaired equilibrium between L-OPA1 and S-OPA1, thereby inhibiting mitochondrial fusion. Involved in mitochondrial safeguard in response to transient mitochondrial membrane depolarization by mediating flickering: cleavage by OMA1 leads to excess production of S-OPA1, preventing mitochondrial hyperfusion. Plays a role in the maintenance and remodeling of mitochondrial cristae, some invaginations of the mitochondrial inner membrane that provide an increase in the surface area. Probably acts by forming helical filaments at the inside of inner membrane tubes with the shape and dimensions of crista junctions. The equilibrium between L-OPA1 and S-OPA1 influences cristae shape and morphology: increased L-OPA1 levels promote cristae stacking and elongated mitochondria, while increased S-OPA1 levels correlated with irregular cristae packing and round mitochondria shape. The chain is Dynamin-like GTPase OPA1, mitochondrial from Pongo abelii (Sumatran orangutan).